We begin with the raw amino-acid sequence, 506 residues long: Maturase K (506 aa).

This sequence belongs to the intron maturase 2 family. MatK subfamily.

Its subcellular location is the plastid. The protein localises to the chloroplast. Functionally, usually encoded in the trnK tRNA gene intron. Probably assists in splicing its own and other chloroplast group II introns. The chain is Maturase K from Phyllodoce caerulea (Blue mountain heath).